Here is a 128-residue protein sequence, read N- to C-terminus: LIM domain-containing protein 2 (128 aa).

The residue at position 1 (Met1) is an N-acetylmethionine. Positions 1–25 (MFQAAGAAQATPSHEAKGGGSSSTV) are disordered. The LIM zinc-binding domain occupies 39–99 (ETCAACQKTV…KPHFQQLFKS (61 aa)). Zn(2+) contacts are provided by Cys41, Cys44, His62, Cys65, Cys68, Cys71, Cys89, and His92.

In terms of assembly, interacts with ILK.

Its subcellular location is the cytoplasm. It localises to the nucleus. In terms of biological role, acts as an activator of the protein-kinase ILK, thereby regulating cell motility. The protein is LIM domain-containing protein 2 (LIMD2) of Bos taurus (Bovine).